A 413-amino-acid chain; its full sequence is MKLIKAVRGTKDIIGEEAKKYIYISNVAQKMFENYGYNFVKTPIFEETELFKRGIGEATDVVEKEMYTFKDRGDRSITLRPENTASLVRCYLENAIYAKEEISRFYYNGSMFRYERPQAGRQREFNQIGLEVFGEKSPKVDAEVIAIGYKFLEKLGITDLEVKINSVGSKASRTVYREKLIEHFKSHLDDMCEDCRDRINRNPLRLLDCKVDGEKDFYKSAPSIIDYLFEDERKHYDDVKKYLDIFGIKYTEDPTLVRGLDYYSSTVFEIVTNKLGSQGTVLGGGRYDNLLKELGDKDIPAVGFATGVERIMMLLEENYPKNTPDVYIAWLGENTSETALKIAESLRDNDIKVYIDYSEKGMKSHMKKADKLETRYCVILGEDEFNKGIVLLKDFSTREQKEIKIEEIINYIK.

Belongs to the class-II aminoacyl-tRNA synthetase family. As to quaternary structure, homodimer.

The protein localises to the cytoplasm. It catalyses the reaction tRNA(His) + L-histidine + ATP = L-histidyl-tRNA(His) + AMP + diphosphate + H(+). This chain is Histidine--tRNA ligase, found in Fusobacterium nucleatum subsp. nucleatum (strain ATCC 25586 / DSM 15643 / BCRC 10681 / CIP 101130 / JCM 8532 / KCTC 2640 / LMG 13131 / VPI 4355).